Here is a 150-residue protein sequence, read N- to C-terminus: Large ribosomal subunit protein uL13 (150 aa).

It belongs to the universal ribosomal protein uL13 family. In terms of assembly, part of the 50S ribosomal subunit.

This protein is one of the early assembly proteins of the 50S ribosomal subunit, although it is not seen to bind rRNA by itself. It is important during the early stages of 50S assembly. The protein is Large ribosomal subunit protein uL13 of Chlamydia muridarum (strain MoPn / Nigg).